Reading from the N-terminus, the 116-residue chain is Large ribosomal subunit protein uL14m (116 aa).

The protein belongs to the universal ribosomal protein uL14 family.

It localises to the mitochondrion. This chain is Large ribosomal subunit protein uL14m (RPL14), found in Acanthamoeba polyphaga (Amoeba).